Reading from the N-terminus, the 219-residue chain is MANEVILLDFWPSMFGMRTRIALREKGVEFEYREEDLRNKSPLLLQMNPIHKKIPVLIHNGKPVNESIIQVQYIDEVWSHKNPILPSDPYLRAQARFWADFIDKKLYDAQRKVWATKGEEQEAGKKDFIEILKTLESELGDKPYFSGDDFGYVDIALIGFYTWFPAYEKFANFSIESEVPKLIAWVKKCLQRESVAKSLPDPEKVTEFVSELRKKFVPE.

Residues 3 to 82 (NEVILLDFWP…YIDEVWSHKN (80 aa)) form the GST N-terminal domain. Glutathione is bound by residues 13–14 (SM), 39–40 (NK), 53–54 (KI), and 66–67 (ES). Residues 88-208 (DPYLRAQARF…LPDPEKVTEF (121 aa)) form the GST C-terminal domain. Residue Ser198 is modified to Phosphoserine.

Belongs to the GST superfamily. Tau family.

The protein localises to the cytoplasm. Its subcellular location is the cytosol. It catalyses the reaction RX + glutathione = an S-substituted glutathione + a halide anion + H(+). In terms of biological role, catalyzes the glutathionylation of 12-oxophytodienoate (OPDA). In vitro, possesses glutathione S-transferase activity toward 1-chloro-2,4-dinitrobenzene (CDNB) and benzyl isothiocyanate (BITC), and glutathione peroxidase activity toward cumene hydroperoxide. This is Glutathione S-transferase U19 (GSTU19) from Arabidopsis thaliana (Mouse-ear cress).